The primary structure comprises 335 residues: Pregnancy-specific beta-1-glycoprotein 2 (335 aa).

The signal sequence occupies residues 1–34 (MGPLSAPPCTEHIKWKGLLVTASLLNFWNLPTTA). The Ig-like V-type domain maps to 35–144 (QVTIEAQPPK…TGYFTFTLYL (110 aa)). N-linked (GlcNAc...) asparagine glycosylation is found at Asn61, Asn104, Asn111, and Asn199. Ig-like C2-type domains lie at 147–234 (PKPS…VTLN) and 239–317 (PDLP…TSLT). 2 disulfides stabilise this stretch: Cys169–Cys217 and Cys261–Cys301.

Belongs to the immunoglobulin superfamily. CEA family.

The protein localises to the secreted. The sequence is that of Pregnancy-specific beta-1-glycoprotein 2 (PSG2) from Homo sapiens (Human).